Consider the following 692-residue polypeptide: Elongation factor G (692 aa).

Residues 8-283 form the tr-type G domain; sequence NRIRNIGIAA…AVIDYLPAPT (276 aa). Residues 17 to 24, 81 to 85, and 135 to 138 each bind GTP; these read AHIDAGKT, DTPGH, and NKMD.

The protein belongs to the TRAFAC class translation factor GTPase superfamily. Classic translation factor GTPase family. EF-G/EF-2 subfamily.

The protein resides in the cytoplasm. Functionally, catalyzes the GTP-dependent ribosomal translocation step during translation elongation. During this step, the ribosome changes from the pre-translocational (PRE) to the post-translocational (POST) state as the newly formed A-site-bound peptidyl-tRNA and P-site-bound deacylated tRNA move to the P and E sites, respectively. Catalyzes the coordinated movement of the two tRNA molecules, the mRNA and conformational changes in the ribosome. In Helicobacter acinonychis (strain Sheeba), this protein is Elongation factor G.